The primary structure comprises 91 residues: Large ribosomal subunit protein eL34 (91 aa).

Belongs to the eukaryotic ribosomal protein eL34 family.

This Thermofilum pendens (strain DSM 2475 / Hrk 5) protein is Large ribosomal subunit protein eL34.